The chain runs to 688 residues: MQHPPLDSIRNIGIISHIDAGKTTVSERILFYTGETHKIGEVHDGEAVMDWMPQEQERGITITSTATVCRWGAWWINLIDTPGHIDFTIEVERSLRALDGAVAIFSAVEGVQPQSESVWRQADRYQVPRICFINKMDRVGADYRETLRQMEEKLGARPVLLQLPVGVEASFAGVVDLIAGEFLTFSEADQGSTVERHPIPAEIAGEAMAVREELIEAAADFDDAILADFLEGTAIAAERIRAAIRKGTIACRIVPVFLGTALRNRGIQPLLDAVAAYLPSPRDIPPVTGQRPDGEAVDSLPCDPAGPLCALAFKVQADEGRKLTYLRIYSGTVKAGGALWNSNRGCFEKAARLFRMHAHKREPIDEALAGDIVAAIGLKEVLTGDTLCDPAHKVLLSGLTVPEPVVALAVEPRGVDDRDKLLPALEKLQWEDPTFRVHEDEETGQTILTGMGELHLEVVTDRLGREFGVQVKTGRPQVVYRETITRPAERQEVFRTEFEGKVQGGEVHLRLAPLHRGEGVRIVVPPAEVLGITRELHTALTESLTRGASTGCVTGYPLTDLEVRVITVPVEQGVTTEGGVRAAAGRGLMRAARDGAPTLLEPLMDLEIITPTEYAGKVLGSVQQKRGRVEGIITQGNTEAIRALVPLAEMFGYMTELRSATKGRGGFTMEFSRFDQAPASVLQQFGLA.

The tr-type G domain maps to 7 to 282 (DSIRNIGIIS…AVAAYLPSPR (276 aa)). GTP is bound by residues 16–23 (SHIDAGKT), 80–84 (DTPGH), and 134–137 (NKMD).

The protein belongs to the TRAFAC class translation factor GTPase superfamily. Classic translation factor GTPase family. EF-G/EF-2 subfamily.

The protein localises to the cytoplasm. In terms of biological role, catalyzes the GTP-dependent ribosomal translocation step during translation elongation. During this step, the ribosome changes from the pre-translocational (PRE) to the post-translocational (POST) state as the newly formed A-site-bound peptidyl-tRNA and P-site-bound deacylated tRNA move to the P and E sites, respectively. Catalyzes the coordinated movement of the two tRNA molecules, the mRNA and conformational changes in the ribosome. In Geobacter metallireducens (strain ATCC 53774 / DSM 7210 / GS-15), this protein is Elongation factor G 2.